A 1359-amino-acid chain; its full sequence is ABC transporter C family member 1 (1359 aa).

The ABC transmembrane type-1 1 domain maps to 111 to 394; the sequence is NKLTIFLQIL…LPNSIQQLQS (284 aa). A run of 6 helical transmembrane segments spans residues 119–139, 147–167, 214–234, 244–264, 332–352, and 363–383; these read ILTN…IQFI, SFLA…SYTF, LLSV…MGIF, LALL…IMVI, MIFW…VLVL, and ITLE…IPLL. The tract at residues 409-478 is disordered; sequence PEIQQNHSSN…QQQQQQQQQQ (70 aa). The segment covering 420–433 has biased composition (acidic residues); that stretch reads EEEEEDEYDDDINS. Residues 440–450 are compositionally biased toward polar residues; that stretch reads HNGSFNWNQVD. Low complexity predominate over residues 459–478; that stretch reads GNQQQQQQQQQQQQQQQQQQ. One can recognise an ABC transporter 1 domain in the interval 470–690; the sequence is QQQQQQQQQQ…IDFESIMKTK (221 aa). 502-509 contacts ATP; sequence GVVGSGKT. The region spanning 763 to 1061 is the ABC transmembrane type-1 2 domain; the sequence is LRVYKEYFKH…LEVKMNSVER (299 aa). 5 consecutive transmembrane segments (helical) span residues 773 to 793, 819 to 839, 884 to 904, 906 to 926, and 999 to 1021; these read GSSI…QIIY, IYLL…FMMA, VDLL…TVLV, IGIM…LIGI, and WVAV…FSLF. Positions 1073–1102 form a coiled coil; it reads NSKINFFRNEQQEEEEEEEEEFDFDNDDYD. One can recognise an ABC transporter 2 domain in the interval 1116–1350; that stretch reads IEFRNVEIKY…QESRFSKLVK (235 aa). Residue 1150-1157 coordinates ATP; that stretch reads GRTGAGKS.

This sequence belongs to the ABC transporter superfamily. ABCC family. Conjugate transporter (TC 3.A.1.208) subfamily.

The protein resides in the membrane. The sequence is that of ABC transporter C family member 1 (abcC1) from Dictyostelium discoideum (Social amoeba).